The chain runs to 208 residues: Uridine kinase (208 aa).

11–18 (GGTGSGKS) contributes to the ATP binding site.

It belongs to the uridine kinase family.

The protein resides in the cytoplasm. The catalysed reaction is uridine + ATP = UMP + ADP + H(+). It carries out the reaction cytidine + ATP = CMP + ADP + H(+). Its pathway is pyrimidine metabolism; CTP biosynthesis via salvage pathway; CTP from cytidine: step 1/3. It functions in the pathway pyrimidine metabolism; UMP biosynthesis via salvage pathway; UMP from uridine: step 1/1. This chain is Uridine kinase, found in Clostridium perfringens (strain ATCC 13124 / DSM 756 / JCM 1290 / NCIMB 6125 / NCTC 8237 / Type A).